The chain runs to 31 residues: Cytochrome b6-f complex subunit 6 (31 aa).

The helical transmembrane segment at 4-26 threads the bilayer; the sequence is ITSYFGFLLAASTITTALFIGLS.

This sequence belongs to the PetL family. As to quaternary structure, the 4 large subunits of the cytochrome b6-f complex are cytochrome b6, subunit IV (17 kDa polypeptide, PetD), cytochrome f and the Rieske protein, while the 4 small subunits are PetG, PetL, PetM and PetN. The complex functions as a dimer.

Its subcellular location is the plastid. The protein resides in the chloroplast thylakoid membrane. Functionally, component of the cytochrome b6-f complex, which mediates electron transfer between photosystem II (PSII) and photosystem I (PSI), cyclic electron flow around PSI, and state transitions. PetL is important for photoautotrophic growth as well as for electron transfer efficiency and stability of the cytochrome b6-f complex. This is Cytochrome b6-f complex subunit 6 from Acorus calamus (Sweet flag).